Consider the following 825-residue polypeptide: AMP deaminase 2 (825 aa).

The disordered stretch occupies residues 1–49 (MASYPSGSGKPKAKYPFKKRASLQASTAAPEARGGLGAPPLQSARSLPG). Residues 11–21 (PKAKYPFKKRA) show a composition bias toward basic residues. The residue at position 22 (S22) is a Phosphoserine. R45 carries the omega-N-methylarginine modification. 3 positions are modified to phosphoserine: S46, S64, and S80. Y91 carries the phosphotyrosine modification. A phosphoserine mark is found at S97 and S114. The residue at position 134 (T134) is a Phosphothreonine. 2 positions are modified to phosphoserine: S136 and S138. Zn(2+)-binding residues include H364 and H366. Residues H366 and 435–440 (KFNAKY) each bind substrate. A Zn(2+)-binding site is contributed by H633. E636 is a binding site for substrate. The active-site Proton acceptor is H655. A Zn(2+)-binding site is contributed by D710. 711–714 (DPLQ) serves as a coordination point for substrate.

The protein belongs to the metallo-dependent hydrolases superfamily. Adenosine and AMP deaminases family. Homotetramer. The cofactor is Zn(2+). As to expression, highly expressed in cerebellum.

It catalyses the reaction AMP + H2O + H(+) = IMP + NH4(+). Its pathway is purine metabolism; IMP biosynthesis via salvage pathway; IMP from AMP: step 1/1. In terms of biological role, AMP deaminase plays a critical role in energy metabolism. Catalyzes the deamination of AMP to IMP and plays an important role in the purine nucleotide cycle. The sequence is that of AMP deaminase 2 from Homo sapiens (Human).